The chain runs to 418 residues: Tyrosine--tRNA ligase (418 aa).

Tyrosine 34 lines the L-tyrosine pocket. The 'HIGH' region motif lies at proline 39–histidine 48. Residues tyrosine 169 and glutamine 173 each coordinate L-tyrosine. A 'KMSKS' region motif is present at residues lysine 229 to serine 233. Lysine 232 provides a ligand contact to ATP. The S4 RNA-binding domain occupies leucine 352 to lysine 410.

Belongs to the class-I aminoacyl-tRNA synthetase family. TyrS type 1 subfamily. In terms of assembly, homodimer.

It is found in the cytoplasm. The enzyme catalyses tRNA(Tyr) + L-tyrosine + ATP = L-tyrosyl-tRNA(Tyr) + AMP + diphosphate + H(+). Functionally, catalyzes the attachment of tyrosine to tRNA(Tyr) in a two-step reaction: tyrosine is first activated by ATP to form Tyr-AMP and then transferred to the acceptor end of tRNA(Tyr). This is Tyrosine--tRNA ligase from Streptococcus suis (strain 98HAH33).